Here is a 263-residue protein sequence, read N- to C-terminus: Hydroxyethylthiazole kinase (263 aa).

A substrate-binding site is contributed by methionine 45. Arginine 121 and serine 167 together coordinate ATP. Glycine 194 contributes to the substrate binding site.

The protein belongs to the Thz kinase family. Requires Mg(2+) as cofactor.

The catalysed reaction is 5-(2-hydroxyethyl)-4-methylthiazole + ATP = 4-methyl-5-(2-phosphooxyethyl)-thiazole + ADP + H(+). Its pathway is cofactor biosynthesis; thiamine diphosphate biosynthesis; 4-methyl-5-(2-phosphoethyl)-thiazole from 5-(2-hydroxyethyl)-4-methylthiazole: step 1/1. In terms of biological role, catalyzes the phosphorylation of the hydroxyl group of 4-methyl-5-beta-hydroxyethylthiazole (THZ). The chain is Hydroxyethylthiazole kinase from Vibrio campbellii (strain ATCC BAA-1116).